The following is a 277-amino-acid chain: 2,3,4,5-tetrahydropyridine-2,6-dicarboxylate N-succinyltransferase (277 aa).

Substrate-binding residues include arginine 106 and aspartate 143.

The protein belongs to the transferase hexapeptide repeat family. In terms of assembly, homotrimer.

The protein resides in the cytoplasm. It catalyses the reaction (S)-2,3,4,5-tetrahydrodipicolinate + succinyl-CoA + H2O = (S)-2-succinylamino-6-oxoheptanedioate + CoA. It functions in the pathway amino-acid biosynthesis; L-lysine biosynthesis via DAP pathway; LL-2,6-diaminopimelate from (S)-tetrahydrodipicolinate (succinylase route): step 1/3. The chain is 2,3,4,5-tetrahydropyridine-2,6-dicarboxylate N-succinyltransferase from Xylella fastidiosa (strain Temecula1 / ATCC 700964).